We begin with the raw amino-acid sequence, 175 residues long: Peptide deformylase (175 aa).

Fe cation contacts are provided by Cys98 and His140. Glu141 is an active-site residue. Residue His144 coordinates Fe cation.

The protein belongs to the polypeptide deformylase family. The cofactor is Fe(2+).

It catalyses the reaction N-terminal N-formyl-L-methionyl-[peptide] + H2O = N-terminal L-methionyl-[peptide] + formate. Removes the formyl group from the N-terminal Met of newly synthesized proteins. Requires at least a dipeptide for an efficient rate of reaction. N-terminal L-methionine is a prerequisite for activity but the enzyme has broad specificity at other positions. The protein is Peptide deformylase of Bradyrhizobium sp. (strain BTAi1 / ATCC BAA-1182).